Reading from the N-terminus, the 199-residue chain is dITP/XTP pyrophosphatase (199 aa).

8-13 lines the substrate pocket; it reads SGNAGK. The active-site Proton acceptor is the Asp-69. Asp-69 lines the Mg(2+) pocket. Substrate is bound by residues Ser-70, 154-157, Lys-177, and 182-183; these read FGYN and HR.

This sequence belongs to the HAM1 NTPase family. In terms of assembly, homodimer. The cofactor is Mg(2+).

The catalysed reaction is XTP + H2O = XMP + diphosphate + H(+). It carries out the reaction dITP + H2O = dIMP + diphosphate + H(+). It catalyses the reaction ITP + H2O = IMP + diphosphate + H(+). In terms of biological role, pyrophosphatase that catalyzes the hydrolysis of nucleoside triphosphates to their monophosphate derivatives, with a high preference for the non-canonical purine nucleotides XTP (xanthosine triphosphate), dITP (deoxyinosine triphosphate) and ITP. Seems to function as a house-cleaning enzyme that removes non-canonical purine nucleotides from the nucleotide pool, thus preventing their incorporation into DNA/RNA and avoiding chromosomal lesions. This is dITP/XTP pyrophosphatase from Xanthomonas campestris pv. campestris (strain 8004).